Consider the following 488-residue polypeptide: 3-octaprenyl-4-hydroxybenzoate carboxy-lyase (488 aa).

Asn-172 contacts Mn(2+). Prenylated FMN-binding positions include 175-177 (IYR), 189-191 (RWL), and 194-195 (RG). Glu-238 provides a ligand contact to Mn(2+). The Proton donor role is filled by Asp-287.

Belongs to the UbiD family. Homohexamer. The cofactor is prenylated FMN. Mn(2+) is required as a cofactor.

Its subcellular location is the cell membrane. It catalyses the reaction a 4-hydroxy-3-(all-trans-polyprenyl)benzoate + H(+) = a 2-(all-trans-polyprenyl)phenol + CO2. Its pathway is cofactor biosynthesis; ubiquinone biosynthesis. Catalyzes the decarboxylation of 3-octaprenyl-4-hydroxy benzoate to 2-octaprenylphenol, an intermediate step in ubiquinone biosynthesis. This chain is 3-octaprenyl-4-hydroxybenzoate carboxy-lyase, found in Pseudomonas fluorescens (strain SBW25).